The following is a 403-amino-acid chain: Alkaline protease 1 (403 aa).

The signal sequence occupies residues 1–21; it reads MQSIKRTLLLLGAVLPAVLAG. Positions 22–121 are excised as a propeptide; it reads PIFPHRRAPT…VEEDQVWHLF (100 aa). The 85-residue stretch at 36–120 folds into the Inhibitor I9 domain; sequence KYIVTFKSDV…AVEEDQVWHL (85 aa). The 274-residue stretch at 130–403 folds into the Peptidase S8 domain; it reads PWGLGSISHK…PNLLAYNGNA (274 aa). Active-site charge relay system residues include Asp162 and His193. Residues Asn253 and Asn309 are each glycosylated (N-linked (GlcNAc...) asparagine). The active-site Charge relay system is the Ser349.

This sequence belongs to the peptidase S8 family.

It localises to the secreted. It carries out the reaction Hydrolysis of proteins with broad specificity, and of Bz-Arg-OEt &gt; Ac-Tyr-OEt. Does not hydrolyze peptide amides.. Functionally, secreted alkaline protease that allows assimilation of proteinaceous substrates. The chain is Alkaline protease 1 (alp1) from Aspergillus flavus.